A 103-amino-acid chain; its full sequence is MAKKSLIQREKKRHKLEQKYHLIRRSSKKKIRSKVSPLSLSEKTKMQEKLQSLPRNSAPTRLHRRCFLTGRPRANYRDFGLSGHILREMVYACLLPGATRSSW.

A disordered region spans residues 26–56 (SSKKKIRSKVSPLSLSEKTKMQEKLQSLPRN).

The protein belongs to the universal ribosomal protein uS14 family. Part of the 30S ribosomal subunit.

Its subcellular location is the plastid. The protein localises to the chloroplast. Its function is as follows. Binds 16S rRNA, required for the assembly of 30S particles. This chain is Small ribosomal subunit protein uS14c, found in Saccharum officinarum (Sugarcane).